The primary structure comprises 210 residues: Imidazole glycerol phosphate synthase subunit HisH (210 aa).

Positions 3-210 constitute a Glutamine amidotransferase type-1 domain; it reads TIAIIDYGMG…ILKNFALSKA (208 aa). Residue C81 is the Nucleophile of the active site. Catalysis depends on residues H190 and E192.

In terms of assembly, heterodimer of HisH and HisF.

It is found in the cytoplasm. It catalyses the reaction 5-[(5-phospho-1-deoxy-D-ribulos-1-ylimino)methylamino]-1-(5-phospho-beta-D-ribosyl)imidazole-4-carboxamide + L-glutamine = D-erythro-1-(imidazol-4-yl)glycerol 3-phosphate + 5-amino-1-(5-phospho-beta-D-ribosyl)imidazole-4-carboxamide + L-glutamate + H(+). It carries out the reaction L-glutamine + H2O = L-glutamate + NH4(+). It functions in the pathway amino-acid biosynthesis; L-histidine biosynthesis; L-histidine from 5-phospho-alpha-D-ribose 1-diphosphate: step 5/9. In terms of biological role, IGPS catalyzes the conversion of PRFAR and glutamine to IGP, AICAR and glutamate. The HisH subunit catalyzes the hydrolysis of glutamine to glutamate and ammonia as part of the synthesis of IGP and AICAR. The resulting ammonia molecule is channeled to the active site of HisF. The protein is Imidazole glycerol phosphate synthase subunit HisH of Geobacter metallireducens (strain ATCC 53774 / DSM 7210 / GS-15).